Here is a 212-residue protein sequence, read N- to C-terminus: Octanoyltransferase (212 aa).

Residues glutamate 30–glutamine 205 form the BPL/LPL catalytic domain. Substrate-binding positions include arginine 69 to histidine 76, serine 136 to glycine 138, and glycine 149 to alanine 151. Residue cysteine 167 is the Acyl-thioester intermediate of the active site.

Belongs to the LipB family.

It is found in the cytoplasm. The enzyme catalyses octanoyl-[ACP] + L-lysyl-[protein] = N(6)-octanoyl-L-lysyl-[protein] + holo-[ACP] + H(+). It functions in the pathway protein modification; protein lipoylation via endogenous pathway; protein N(6)-(lipoyl)lysine from octanoyl-[acyl-carrier-protein]: step 1/2. Catalyzes the transfer of endogenously produced octanoic acid from octanoyl-acyl-carrier-protein onto the lipoyl domains of lipoate-dependent enzymes. Lipoyl-ACP can also act as a substrate although octanoyl-ACP is likely to be the physiological substrate. The protein is Octanoyltransferase of Marinobacter nauticus (strain ATCC 700491 / DSM 11845 / VT8) (Marinobacter aquaeolei).